The chain runs to 145 residues: Inner membrane protein YiaA (145 aa).

The Cytoplasmic portion of the chain corresponds to methionine 1–phenylalanine 12. The helical transmembrane segment at serine 13–tryptophan 32 threads the bilayer. The Periplasmic segment spans residues asparagine 33–lysine 41. The chain crosses the membrane as a helical span at residues glycine 42–glutamine 59. Residues lysine 60–threonine 71 lie on the Cytoplasmic side of the membrane. A helical membrane pass occupies residues threonine 72–leucine 94. The Periplasmic segment spans residues tryptophan 95–threonine 98. Residues leucine 99–valine 121 traverse the membrane as a helical segment. At glutamine 122–glutamate 145 the chain is on the cytoplasmic side.

It localises to the cell inner membrane. This is Inner membrane protein YiaA (yiaA) from Escherichia coli (strain K12).